Reading from the N-terminus, the 643-residue chain is MNIRSNPDTTRPAVTTGALPSSRKIFSVPEAAPDLLVPLREIVLSEGAGEPNLPVYDTSGPYTDPDVTIDVNAGLPRTRLAWVKERGGVEEYDGRVIKPEDNGNVGASHAATAFKAHHKPLRGVGDAPITQLEFARAGIITKEMIYVAERENIGRKQQLERAEAALADGESFGAAVPTFITPEFVREEIARGRAIIPANINHAELEPMIIGRNFLVKINANIGNSAVTSSVEEEVDKMVWAIRWGADTVMDLSTGRNIHTTREWILRNSPVPIGTVPIYQALEKCDGDPVKLTWELYRDTLVEQCEQGVDYFTIHAGVRLPYIHLTADRVTGIVSRGGSIMAKWCLAHHKESFLYTHFEEICDLMRKYDVSFSLGDGLRPGSIADANDRAQFAELETLGELTQIAWNKGCQVMIEGPGHVPMHKIKINMDKQLKECGEAPFYTLGPLTTDIAPGYDHITSGIGAAMIGWFGCAMLCYVTPKEHLGLPNRDDVKTGVITYRVAAHAADLAKGHPAAQLRDDALSRARFDFRWQDQFNLGLDPETAVAFHDETLPKEAHKVAHFCSMCGPKFCSMKITQDVRDYAATLGDNEKAALYPEGSKLASGMTMKGVIEDGMTQMSEKFKEMGGQVYVEAEAVKESNKVL.

Residues Asn-221, Met-250, Tyr-279, His-315, 335 to 337 (SRG), 376 to 379 (DGLR), and Glu-415 contribute to the substrate site. His-419 contacts Zn(2+). Tyr-442 lines the substrate pocket. Residue His-483 participates in Zn(2+) binding. [4Fe-4S] cluster is bound by residues Cys-563, Cys-566, and Cys-571.

This sequence belongs to the ThiC family. Homodimer. The cofactor is [4Fe-4S] cluster.

It catalyses the reaction 5-amino-1-(5-phospho-beta-D-ribosyl)imidazole + S-adenosyl-L-methionine = 4-amino-2-methyl-5-(phosphooxymethyl)pyrimidine + CO + 5'-deoxyadenosine + formate + L-methionine + 3 H(+). Its pathway is cofactor biosynthesis; thiamine diphosphate biosynthesis. Its function is as follows. Catalyzes the synthesis of the hydroxymethylpyrimidine phosphate (HMP-P) moiety of thiamine from aminoimidazole ribotide (AIR) in a radical S-adenosyl-L-methionine (SAM)-dependent reaction. The polypeptide is Phosphomethylpyrimidine synthase (Nitrobacter hamburgensis (strain DSM 10229 / NCIMB 13809 / X14)).